The primary structure comprises 172 residues: Antibacterial protein PR-39 (172 aa).

The N-terminal stretch at 1 to 29 (METQRASLCLGRWSLWLLLLGLVVPSASA) is a signal peptide. At glutamine 30 the chain carries Pyrrolidone carboxylic acid. The propeptide occupies 30–130 (QALSYREAVL…DISCNEIQSV (101 aa)). Positions 61–80 (DQPPKADEDPGTPKPVSFTV) are disordered. 2 cysteine pairs are disulfide-bonded: cysteine 85/cysteine 96 and cysteine 107/cysteine 124. The segment at 130 to 172 (VRRRPRPPYLPRPRPPPFFPPRLPPRIPPGFPPRFPPRFPGKR) is disordered. Residues 136–172 (PPYLPRPRPPPFFPPRLPPRIPPGFPPRFPPRFPGKR) show a composition bias toward pro residues. A Proline amide modification is found at proline 169.

The protein belongs to the cathelicidin family. In terms of tissue distribution, small intestine and bone marrow.

It localises to the secreted. Functionally, exerts a potent antimicrobial activity against both E.coli and B.megaterium. The protein is Antibacterial protein PR-39 (PR39) of Sus scrofa (Pig).